A 176-amino-acid polypeptide reads, in one-letter code: MFHATTIVAVKRGTKVAVAGDGQVTFGQNTIMKHTARKVRRLHNGQVLAGFAGSVADAFTLFEKFEGKLEEYHGNLMRAAVELAKAWRTDKYLRTLEAMLIVANQEHLLVLSGNGEVIEPDEGVTAIGSGGPYALAAARALTKHTNLSPKDITYEALNLAADICVYTNKNIVVEEI.

Threonine 5 is an active-site residue. Na(+) contacts are provided by alanine 161, cysteine 164, and threonine 167.

Belongs to the peptidase T1B family. HslV subfamily. As to quaternary structure, a double ring-shaped homohexamer of HslV is capped on each side by a ring-shaped HslU homohexamer. The assembly of the HslU/HslV complex is dependent on binding of ATP.

It is found in the cytoplasm. It carries out the reaction ATP-dependent cleavage of peptide bonds with broad specificity.. Allosterically activated by HslU binding. Protease subunit of a proteasome-like degradation complex believed to be a general protein degrading machinery. This is ATP-dependent protease subunit HslV from Desulforamulus reducens (strain ATCC BAA-1160 / DSM 100696 / MI-1) (Desulfotomaculum reducens).